The primary structure comprises 264 residues: NAD kinase 1 (264 aa).

The active-site Proton acceptor is D45. NAD(+) contacts are provided by residues 45–46 (DG), 122–123 (NE), R148, D150, 161–166 (TAYNKS), and A185.

Belongs to the NAD kinase family. A divalent metal cation serves as cofactor.

Its subcellular location is the cytoplasm. The catalysed reaction is NAD(+) + ATP = ADP + NADP(+) + H(+). In terms of biological role, involved in the regulation of the intracellular balance of NAD and NADP, and is a key enzyme in the biosynthesis of NADP. Catalyzes specifically the phosphorylation on 2'-hydroxyl of the adenosine moiety of NAD to yield NADP. This Listeria monocytogenes serotype 4b (strain F2365) protein is NAD kinase 1.